A 407-amino-acid chain; its full sequence is Imidazolonepropionase (407 aa).

The Fe(3+) site is built by His68 and His70. His68 and His70 together coordinate Zn(2+). 4-imidazolone-5-propanoate is bound by residues Arg77, Tyr140, and His173. N-formimidoyl-L-glutamate is bound at residue Tyr140. His236 provides a ligand contact to Fe(3+). His236 lines the Zn(2+) pocket. 4-imidazolone-5-propanoate is bound at residue Gln239. Position 311 (Asp311) interacts with Fe(3+). Asp311 contributes to the Zn(2+) binding site. The N-formimidoyl-L-glutamate site is built by Asn313 and Gly315. 4-imidazolone-5-propanoate is bound at residue Thr316.

This sequence belongs to the metallo-dependent hydrolases superfamily. HutI family. Zn(2+) serves as cofactor. Requires Fe(3+) as cofactor.

The protein localises to the cytoplasm. The catalysed reaction is 4-imidazolone-5-propanoate + H2O = N-formimidoyl-L-glutamate. It functions in the pathway amino-acid degradation; L-histidine degradation into L-glutamate; N-formimidoyl-L-glutamate from L-histidine: step 3/3. Functionally, catalyzes the hydrolytic cleavage of the carbon-nitrogen bond in imidazolone-5-propanoate to yield N-formimidoyl-L-glutamate. It is the third step in the universal histidine degradation pathway. This is Imidazolonepropionase from Stenotrophomonas maltophilia (strain R551-3).